Here is a 449-residue protein sequence, read N- to C-terminus: Heterogeneous nuclear ribonucleoprotein H2 (449 aa).

Position 1 is an N-acetylmethionine (M1). M2 carries the post-translational modification N-acetylmethionine; in Heterogeneous nuclear ribonucleoprotein H2, N-terminally processed. The region spanning F11 to S90 is the RRM 1 domain. Phosphoserine is present on S23. Residue K35 forms a Glycyl lysine isopeptide (Lys-Gly) (interchain with G-Cter in SUMO2) linkage. Residues S54 and S63 each carry the phosphoserine modification. K87 is covalently cross-linked (Glycyl lysine isopeptide (Lys-Gly) (interchain with G-Cter in SUMO2)). At S90 the chain carries Phosphoserine. Residue K98 forms a Glycyl lysine isopeptide (Lys-Gly) (interchain with G-Cter in SUMO2) linkage. In terms of domain architecture, RRM 2 spans G111 to R188. Residue R233 is modified to Dimethylated arginine; alternate. Omega-N-methylarginine; alternate is present on R233. One copy of the 1-1 repeat lies at G234–Y249. Residues G234 to Y433 are 2 X 16 AA Gly-rich approximate repeats. A Phosphotyrosine modification is found at Y246. Residues H289–T364 enclose the RRM 3 domain. S310 is modified (phosphoserine). A run of 3 repeats spans residues H354 to Y372, H374 to Y392, and G418 to Y433. The 2 X 19 AA perfect repeats stretch occupies residues H354–Y392.

As to quaternary structure, component of a ribonucleoprotein complex containing mRNAs and RNA-binding proteins including DDX5, HNRNPH2 and SRSF1 as well as splicing regulator ARVCF. Interacts with TXNL4/DIM1.

The protein localises to the nucleus. Its subcellular location is the nucleoplasm. Its function is as follows. This protein is a component of the heterogeneous nuclear ribonucleoprotein (hnRNP) complexes which provide the substrate for the processing events that pre-mRNAs undergo before becoming functional, translatable mRNAs in the cytoplasm. Binds poly(RG). This is Heterogeneous nuclear ribonucleoprotein H2 (HNRNPH2) from Bos taurus (Bovine).